Here is a 314-residue protein sequence, read N- to C-terminus: MIEIEKPKIETVELSEDAKYGKFVVEPLERGYGTTLGNSLRRILLSSLPGAAVTSVQIDGVLHEFSTIDGVVEDVTAIILNIKKLALKIYSDEEKTLEIDVQGEGVVTAADITHDSDVEILNPDLHIATLAEGGRLRMRMTAKRGRGYVPAEANKREDQPIGVIPIDSIYTPVSRVSYQVENTRVGQVTDYDKLTIDVWTDGSIGPKEAISLGAKILTEHLNIFVGLTDEAQNAEIMVEKEDDQKEKVLEMTIEELDLSVRSYNCLKRAGINTVQELTQKTEEDMMKVRNLGRKSLEEVKAKLAELGLSLRKDD.

An alpha N-terminal domain (alpha-NTD) region spans residues 1–228 (MIEIEKPKIE…EHLNIFVGLT (228 aa)). Positions 245–314 (KEKVLEMTIE…ELGLSLRKDD (70 aa)) are alpha C-terminal domain (alpha-CTD).

This sequence belongs to the RNA polymerase alpha chain family. Homodimer. The RNAP catalytic core consists of 2 alpha, 1 beta, 1 beta' and 1 omega subunit. When a sigma factor is associated with the core the holoenzyme is formed, which can initiate transcription.

The catalysed reaction is RNA(n) + a ribonucleoside 5'-triphosphate = RNA(n+1) + diphosphate. In terms of biological role, DNA-dependent RNA polymerase catalyzes the transcription of DNA into RNA using the four ribonucleoside triphosphates as substrates. The protein is DNA-directed RNA polymerase subunit alpha of Geobacillus kaustophilus (strain HTA426).